The chain runs to 239 residues: MLEIGFCTLEDQCPYLKDKRSRIEYKYIENCSKEINNELIKRGWRRFGRYFSRPICKDCDECLSLRILVNEYNFSRSERRVINKNINTKVILRTPNLSNEHLFLYDKYHRFMEEKKNWKRYDLSFKQYYNLYVDGFMNFGYELAFYIEDKLVCVDLIDILEDGISSIYCFYDPDFSYFSLGKFSLLNEIQIAKKMNLDYIYLGYFVKKCQSLSYKADYTPNEILKGTKELFENEVLWEK.

This sequence belongs to the R-transferase family. Bpt subfamily.

The protein resides in the cytoplasm. The enzyme catalyses N-terminal L-glutamyl-[protein] + L-leucyl-tRNA(Leu) = N-terminal L-leucyl-L-glutamyl-[protein] + tRNA(Leu) + H(+). The catalysed reaction is N-terminal L-aspartyl-[protein] + L-leucyl-tRNA(Leu) = N-terminal L-leucyl-L-aspartyl-[protein] + tRNA(Leu) + H(+). Functions in the N-end rule pathway of protein degradation where it conjugates Leu from its aminoacyl-tRNA to the N-termini of proteins containing an N-terminal aspartate or glutamate. The sequence is that of Aspartate/glutamate leucyltransferase from Campylobacter jejuni subsp. jejuni serotype O:6 (strain 81116 / NCTC 11828).